The chain runs to 274 residues: Elongation factor Ts (274 aa).

The involved in Mg(2+) ion dislocation from EF-Tu stretch occupies residues 79 to 82 (TDFV).

The protein belongs to the EF-Ts family.

The protein localises to the cytoplasm. In terms of biological role, associates with the EF-Tu.GDP complex and induces the exchange of GDP to GTP. It remains bound to the aminoacyl-tRNA.EF-Tu.GTP complex up to the GTP hydrolysis stage on the ribosome. This Porphyromonas gingivalis (strain ATCC 33277 / DSM 20709 / CIP 103683 / JCM 12257 / NCTC 11834 / 2561) protein is Elongation factor Ts.